The chain runs to 451 residues: tRNA modification GTPase MnmE (451 aa).

Positions 23, 80, and 119 each coordinate (6S)-5-formyl-5,6,7,8-tetrahydrofolate. The TrmE-type G domain maps to 215–372; that stretch reads GIKVVLAGQP…LRAALLKTAG (158 aa). Asn225 provides a ligand contact to K(+). Residues 225–230, 244–250, and 269–272 each bind GTP; these read NVGKSS, TDIPGTT, and DTAG. Ser229 contributes to the Mg(2+) binding site. Residues Thr244, Ile246, and Thr249 each coordinate K(+). Position 250 (Thr250) interacts with Mg(2+). Residue Lys451 coordinates (6S)-5-formyl-5,6,7,8-tetrahydrofolate.

Belongs to the TRAFAC class TrmE-Era-EngA-EngB-Septin-like GTPase superfamily. TrmE GTPase family. In terms of assembly, homodimer. Heterotetramer of two MnmE and two MnmG subunits. The cofactor is K(+).

It localises to the cytoplasm. In terms of biological role, exhibits a very high intrinsic GTPase hydrolysis rate. Involved in the addition of a carboxymethylaminomethyl (cmnm) group at the wobble position (U34) of certain tRNAs, forming tRNA-cmnm(5)s(2)U34. The chain is tRNA modification GTPase MnmE from Nitrosomonas europaea (strain ATCC 19718 / CIP 103999 / KCTC 2705 / NBRC 14298).